Reading from the N-terminus, the 238-residue chain is Hydatid disease diagnostic antigen P-29 (238 aa).

In terms of domain architecture, BAR spans 18–238 (GELVNKNEKT…AKECSMMLGE (221 aa)).

This Echinococcus granulosus (Hydatid tapeworm) protein is Hydatid disease diagnostic antigen P-29.